A 251-amino-acid polypeptide reads, in one-letter code: Pyrroloquinoline-quinone synthase (251 aa).

The protein belongs to the PqqC family.

The catalysed reaction is 6-(2-amino-2-carboxyethyl)-7,8-dioxo-1,2,3,4,7,8-hexahydroquinoline-2,4-dicarboxylate + 3 O2 = pyrroloquinoline quinone + 2 H2O2 + 2 H2O + H(+). It functions in the pathway cofactor biosynthesis; pyrroloquinoline quinone biosynthesis. Functionally, ring cyclization and eight-electron oxidation of 3a-(2-amino-2-carboxyethyl)-4,5-dioxo-4,5,6,7,8,9-hexahydroquinoline-7,9-dicarboxylic-acid to PQQ. This is Pyrroloquinoline-quinone synthase from Pseudomonas syringae pv. tomato (strain ATCC BAA-871 / DC3000).